The chain runs to 276 residues: MESTIGIDAGGTLTKIAYLNKKMQLAFEKVYSNEQNKIIDWLKNQTGIKQICITGGKAKQLQQLLSASYKIVELNEFEATLVGVRYILKKEKYDINNFVLTNIGTGTSIHYIYNDQYIRAGGTGVGGGTIMGLSKLLTNIDHFEDVIPLTKVGSRKELDITVGDIYGGILSPIDNSLTASNFGKAAITDSNYNSSDILATIQGLVGEVVTALSLQFAETKNIDHIIYIGSTLCNNIHLQNIISSYTKYQNKTPIFLRDGGNSGAIGALLYATNKKS.

8 to 15 (DAGGTLTK) contributes to the ATP binding site. The active-site Proton acceptor is glutamate 76. Residues threonine 105, 127–131 (GGTIM), phenylalanine 143, and serine 230 each bind ATP.

It belongs to the type II pantothenate kinase family. In terms of assembly, homodimer.

The protein localises to the cytoplasm. The catalysed reaction is (R)-pantothenate + ATP = (R)-4'-phosphopantothenate + ADP + H(+). It functions in the pathway cofactor biosynthesis; coenzyme A biosynthesis; CoA from (R)-pantothenate: step 1/5. In terms of biological role, catalyzes the phosphorylation of pantothenate (Pan), the first step in CoA biosynthesis. This chain is Type II pantothenate kinase, found in Bacillus anthracis.